The primary structure comprises 150 residues: Detocs response regulatory protein DtcB (150 aa).

The Response regulatory domain occupies 2 to 150 (KILIADDNIQ…TDLIKKITEL (149 aa)). Aspartate 54 carries the 4-aspartylphosphate modification.

Probably phosphorylated by DtcA.

Functionally, possible phosphate scavenger member of the two-component regulatory system Detocs that confers resistance to bacteriophage. When the system (DtcA-DtcB-DtcC) is expressed in a susceptible E.coli (strain MG1655) it confers resistance to bacteriophages T2, T4, T5, T7, SECphi4, SECphi6 and SECphi27; the level of resistance varies, resistance to T2, T7 and SECphi4 is not very high. DtcA probably autophosphorylates upon sensing viral infection, and subsequently transfers the phosphate signal to DtcC which activates it, leading to an antiviral defense; DtcB (this subunit) may scavenge phosphorylation signals from accidental activation of DtcA. This Enterobacter cloacae (strain JD6301) protein is Detocs response regulatory protein DtcB.